The following is a 121-amino-acid chain: MARILGVEVPDNKALFVGLTYIYGIGRKTALDILNNLEIDPNKRAKELTDDEISRLSHHINENYKVEGELRQEINKNIKRLIDIGSYRGKRHKAGLPVRGQKTHSNARTRKGPRLTKIKKR.

Residues 92 to 121 (HKAGLPVRGQKTHSNARTRKGPRLTKIKKR) are disordered. Over residues 101–121 (QKTHSNARTRKGPRLTKIKKR) the composition is skewed to basic residues.

Belongs to the universal ribosomal protein uS13 family. In terms of assembly, part of the 30S ribosomal subunit. Forms a loose heterodimer with protein S19. Forms two bridges to the 50S subunit in the 70S ribosome.

Functionally, located at the top of the head of the 30S subunit, it contacts several helices of the 16S rRNA. In the 70S ribosome it contacts the 23S rRNA (bridge B1a) and protein L5 of the 50S subunit (bridge B1b), connecting the 2 subunits; these bridges are implicated in subunit movement. Contacts the tRNAs in the A and P-sites. This Petrotoga mobilis (strain DSM 10674 / SJ95) protein is Small ribosomal subunit protein uS13.